The chain runs to 300 residues: Cholesterol 25-hydroxylase-like protein (300 aa).

The N-linked (GlcNAc...) asparagine glycan is linked to Asn9. Helical transmembrane passes span 43 to 63, 95 to 115, and 130 to 152; these read LFPP…FTFI, LQGW…LIWV, and MVSQ…HYFN. The 132-residue stretch at 135-266 folds into the Fatty acid hydroxylase domain; the sequence is AIFFLAFDFT…WFNYLDRLMG (132 aa). Positions 148–152 match the Histidine box-1 motif; it reads FHYFN. Residues 163–167 carry the Histidine box-2 motif; it reads HSVHH. Residues 180–200 traverse the membrane as a helical segment; the sequence is LHPFELFFVATFITTVPWIFP. The short motif at 242-248 is the Histidine box-3 element; that stretch reads AHDMHHL.

This sequence belongs to the sterol desaturase family. The cofactor is Fe cation.

The protein resides in the membrane. In terms of biological role, probable sterol desaturase. This is Cholesterol 25-hydroxylase-like protein from Caenorhabditis briggsae.